We begin with the raw amino-acid sequence, 69 residues long: MSYKKLYQLTAIFSLPLTILLVSLSSLRIVGEGNSYVDVFLSFIIFLGFIELIHGIRKILVWSGWKNGS.

Over 1 to 6 (MSYKKL) the chain is Cytoplasmic. A helical membrane pass occupies residues 7-29 (YQLTAIFSLPLTILLVSLSSLRI). The Periplasmic portion of the chain corresponds to 30–38 (VGEGNSYVD). The helical transmembrane segment at 39 to 61 (VFLSFIIFLGFIELIHGIRKILV) threads the bilayer. Topologically, residues 62-69 (WSGWKNGS) are cytoplasmic.

It is found in the cell membrane. In terms of biological role, protects a microcin H47-producer cell against microcin H47. This is Microcin H47 immunity protein MchI (mchI) from Escherichia coli.